Consider the following 629-residue polypeptide: Chaperone protein DnaK (629 aa).

Low complexity predominate over residues 576 to 587 (QAYQQQQDAQAG). Residues 576–629 (QAYQQQQDAQAGAAGGAGGMGGMGGMADGPGGAADADGDDEEYVDADFEDVDEE) form a disordered region. Gly residues predominate over residues 588–607 (AAGGAGGMGGMGGMADGPGG). Residues 611–629 (ADGDDEEYVDADFEDVDEE) are compositionally biased toward acidic residues.

It belongs to the heat shock protein 70 family.

Its function is as follows. Acts as a chaperone. This Halobacterium salinarum (strain ATCC 29341 / DSM 671 / R1) protein is Chaperone protein DnaK.